The following is a 357-amino-acid chain: tRNA N6-adenosine threonylcarbamoyltransferase (357 aa).

Histidine 120 and histidine 124 together coordinate Fe cation. Residues 143–147, aspartate 176, glycine 189, and asparagine 289 each bind substrate; that span reads LVSGG. Position 317 (aspartate 317) interacts with Fe cation.

It belongs to the KAE1 / TsaD family. Fe(2+) serves as cofactor.

It localises to the cytoplasm. The enzyme catalyses L-threonylcarbamoyladenylate + adenosine(37) in tRNA = N(6)-L-threonylcarbamoyladenosine(37) in tRNA + AMP + H(+). Functionally, required for the formation of a threonylcarbamoyl group on adenosine at position 37 (t(6)A37) in tRNAs that read codons beginning with adenine. Is involved in the transfer of the threonylcarbamoyl moiety of threonylcarbamoyl-AMP (TC-AMP) to the N6 group of A37, together with TsaE and TsaB. TsaD likely plays a direct catalytic role in this reaction. The chain is tRNA N6-adenosine threonylcarbamoyltransferase from Polynucleobacter asymbioticus (strain DSM 18221 / CIP 109841 / QLW-P1DMWA-1) (Polynucleobacter necessarius subsp. asymbioticus).